A 365-amino-acid polypeptide reads, in one-letter code: Aminomethyltransferase (365 aa).

It belongs to the GcvT family. The glycine cleavage system is composed of four proteins: P, T, L and H.

The catalysed reaction is N(6)-[(R)-S(8)-aminomethyldihydrolipoyl]-L-lysyl-[protein] + (6S)-5,6,7,8-tetrahydrofolate = N(6)-[(R)-dihydrolipoyl]-L-lysyl-[protein] + (6R)-5,10-methylene-5,6,7,8-tetrahydrofolate + NH4(+). Functionally, the glycine cleavage system catalyzes the degradation of glycine. The protein is Aminomethyltransferase of Chlorobium phaeovibrioides (strain DSM 265 / 1930) (Prosthecochloris vibrioformis (strain DSM 265)).